Reading from the N-terminus, the 199-residue chain is Molybdenum cofactor guanylyltransferase (199 aa).

GTP is bound by residues 12–14 (LAG), Lys-25, Asn-53, Asp-71, and Asp-101. Asp-101 serves as a coordination point for Mg(2+).

It belongs to the MobA family. In terms of assembly, monomer. Mg(2+) serves as cofactor.

Its subcellular location is the cytoplasm. The enzyme catalyses Mo-molybdopterin + GTP + H(+) = Mo-molybdopterin guanine dinucleotide + diphosphate. In terms of biological role, transfers a GMP moiety from GTP to Mo-molybdopterin (Mo-MPT) cofactor (Moco or molybdenum cofactor) to form Mo-molybdopterin guanine dinucleotide (Mo-MGD) cofactor. This is Molybdenum cofactor guanylyltransferase from Polynucleobacter asymbioticus (strain DSM 18221 / CIP 109841 / QLW-P1DMWA-1) (Polynucleobacter necessarius subsp. asymbioticus).